The sequence spans 775 residues: Dipeptidyl peptidase 4 (775 aa).

Positions 1 to 15 are cleaved as a signal peptide; that stretch reads MKFLSLLLLAGIAQA. N-linked (GlcNAc...) asparagine glycosylation is found at asparagine 81, asparagine 111, asparagine 170, and asparagine 219. Catalysis depends on charge relay system residues serine 613, aspartate 690, and histidine 725.

Belongs to the peptidase S9B family.

The protein localises to the secreted. The enzyme catalyses Release of an N-terminal dipeptide, Xaa-Yaa-|-Zaa-, from a polypeptide, preferentially when Yaa is Pro, provided Zaa is neither Pro nor hydroxyproline.. Its function is as follows. Extracellular dipeptidyl-peptidase which removes N-terminal dipeptides sequentially from polypeptides having unsubstituted N-termini provided that the penultimate residue is proline. Contributes to pathogenicity. This chain is Dipeptidyl peptidase 4 (DPP4), found in Trichophyton equinum (Horse ringworm fungus).